Consider the following 201-residue polypeptide: Large ribosomal subunit protein uL4 (201 aa).

The disordered stretch occupies residues 43–73 (TRAQKTRSEVSGGGAKPWRQKGTGRARAGTT).

This sequence belongs to the universal ribosomal protein uL4 family. As to quaternary structure, part of the 50S ribosomal subunit.

Its function is as follows. One of the primary rRNA binding proteins, this protein initially binds near the 5'-end of the 23S rRNA. It is important during the early stages of 50S assembly. It makes multiple contacts with different domains of the 23S rRNA in the assembled 50S subunit and ribosome. Forms part of the polypeptide exit tunnel. The protein is Large ribosomal subunit protein uL4 of Colwellia psychrerythraea (strain 34H / ATCC BAA-681) (Vibrio psychroerythus).